The sequence spans 479 residues: Serine carboxypeptidase-like 44 (479 aa).

The signal sequence occupies residues 1-22; that stretch reads MVGGKWRFLEVAVVVMVLQWSC. 3 disulfides stabilise this stretch: C92–C352, C253–C270, and C295–C320. N143 is a glycosylation site (N-linked (GlcNAc...) asparagine). The active site involves S184. N265 carries N-linked (GlcNAc...) asparagine glycosylation. An N-linked (GlcNAc...) asparagine glycan is attached at N341. D389 is an active-site residue. N-linked (GlcNAc...) asparagine glycosylation occurs at N411. Residue H446 is part of the active site.

The protein belongs to the peptidase S10 family. In terms of tissue distribution, expressed in seedlings.

It is found in the secreted. In terms of biological role, probable carboxypeptidase. The sequence is that of Serine carboxypeptidase-like 44 (SCPL44) from Arabidopsis thaliana (Mouse-ear cress).